A 734-amino-acid chain; its full sequence is Photosystem I P700 chlorophyll a apoprotein A2 (734 aa).

Transmembrane regions (helical) follow at residues 46-69 (IFASHFGQLAIIFLWTSGNLFHVA), 135-158 (LYTGALFLLIVSAVALFAGWLHLQ), 175-199 (LNHHLSGLFGVSSLAWTGHLVHVAI), 273-291 (IAHHHLAIAVLFIIAGHMY), 330-353 (LHFQLGLALASLGVVTSLVAQHMY), 369-395 (AALYTHHQYIAGFIMTGAFAHGAIFFV), 417-439 (AIISHLSWASLFLGFHTLGLYVH), and 517-535 (FLVHHAIALGLHTTTLILV). The [4Fe-4S] cluster site is built by Cys-559 and Cys-568. A run of 2 helical transmembrane segments spans residues 575-596 (AFYLAVFWMLNTIGWVTFYWHW) and 643-665 (LSVWAWMFLFGHLVWATGFMFLI). Positions 654, 662, and 670 each coordinate chlorophyll a. Residue Trp-671 participates in phylloquinone binding. Residues 707–727 (LVGLAHFSVGYVLTYAAFLIA) traverse the membrane as a helical segment.

The protein belongs to the PsaA/PsaB family. The PsaA/B heterodimer binds the P700 chlorophyll special pair and subsequent electron acceptors. PSI consists of a core antenna complex that captures photons, and an electron transfer chain that converts photonic excitation into a charge separation. The eukaryotic PSI reaction center is composed of at least 11 subunits. Requires P700 is a chlorophyll a/chlorophyll a' dimer, A0 is one or more chlorophyll a, A1 is one or both phylloquinones and FX is a shared 4Fe-4S iron-sulfur center. as cofactor.

The protein resides in the plastid. It is found in the chloroplast thylakoid membrane. The enzyme catalyses reduced [plastocyanin] + hnu + oxidized [2Fe-2S]-[ferredoxin] = oxidized [plastocyanin] + reduced [2Fe-2S]-[ferredoxin]. PsaA and PsaB bind P700, the primary electron donor of photosystem I (PSI), as well as the electron acceptors A0, A1 and FX. PSI is a plastocyanin-ferredoxin oxidoreductase, converting photonic excitation into a charge separation, which transfers an electron from the donor P700 chlorophyll pair to the spectroscopically characterized acceptors A0, A1, FX, FA and FB in turn. Oxidized P700 is reduced on the lumenal side of the thylakoid membrane by plastocyanin. In Chlorokybus atmophyticus (Soil alga), this protein is Photosystem I P700 chlorophyll a apoprotein A2.